The following is a 372-amino-acid chain: Neuropeptide S receptor (372 aa).

Over 1–52 (MPANLTEGSFHANQTVPMLDSSPVACTEIVTFTEALEAEEWGSFYSSFKTEQ) the chain is Extracellular. Asn-4 and Asn-13 each carry an N-linked (GlcNAc...) asparagine glycan. A helical transmembrane segment spans residues 53–73 (LITLWVLFVFTIVGNSVVLFS). Residues 74-82 (TWRRKRKSR) are Cytoplasmic-facing. The helical transmembrane segment at 83–103 (MTFFVTQLAITDSFTGLINIL) threads the bilayer. Topologically, residues 104–122 (TDIIWRFTGDFMAPDLVCR) are extracellular. Cys-121 and Cys-198 form a disulfide bridge. The helical transmembrane segment at 123–143 (IVRYLQVVLLYASTYVLVSLS) threads the bilayer. Topologically, residues 144–165 (IDRYHAIVYPMKFLQGAEKQAK) are cytoplasmic. A helical membrane pass occupies residues 166-186 (VLIGIAWSLSFLFSIPTLIIF). Residues 187-213 (GKRTLSNGEVQCWALWPDDSYWTPYMT) are Extracellular-facing. The chain crosses the membrane as a helical span at residues 214-234 (IVAFLVYFIPLTIISVIYGLV). Residues 235 to 276 (IRTIWIKSKAHETVISNCSDGELCCSYNRGLISKAKIKAIKY) are Cytoplasmic-facing. Residues 277 to 297 (SIVIILAFICCWSPYFLFDML) traverse the membrane as a helical segment. The Extracellular segment spans residues 298–313 (DNFNLLPDTKERFYAS). A helical membrane pass occupies residues 314-334 (VIIQNLPALNSAINPLIYCIF). Topologically, residues 335–372 (SGSLCSPCKVQRSQDSRMTYRERSERHEMQILSKPEFI) are cytoplasmic.

Belongs to the G-protein coupled receptor 1 family. Vasopressin/oxytocin receptor subfamily.

It is found in the cell membrane. G-protein coupled receptor for neuropeptide S (NPS). Promotes mobilization of intracellular Ca(2+) stores. Inhibits cell growth in response to NPS binding. Involved in pathogenesis of asthma and other IgE-mediated diseases. The sequence is that of Neuropeptide S receptor (Npsr1) from Rattus norvegicus (Rat).